The chain runs to 231 residues: Large ribosomal subunit protein uL1 (231 aa).

Belongs to the universal ribosomal protein uL1 family. In terms of assembly, part of the 50S ribosomal subunit.

Binds directly to 23S rRNA. The L1 stalk is quite mobile in the ribosome, and is involved in E site tRNA release. Its function is as follows. Protein L1 is also a translational repressor protein, it controls the translation of the L11 operon by binding to its mRNA. This chain is Large ribosomal subunit protein uL1, found in Agrobacterium fabrum (strain C58 / ATCC 33970) (Agrobacterium tumefaciens (strain C58)).